The primary structure comprises 131 residues: Protein FAM107B (131 aa).

Position 2 is an N-acetylalanine (A2). Disordered stretches follow at residues 39 to 78 (MNQK…KKKS) and 100 to 131 (KLQE…AQES). K50 bears the N6-acetyllysine mark. Positions 52 to 78 (ELQKVMEKRRRDQVIKQKEEEAQKKKS) are enriched in basic and acidic residues. The stretch at 61–112 (RRDQVIKQKEEEAQKKKSDLEIELLKRQQKLEQLELEKQKLQEEQENAPEFV) forms a coiled coil.

The protein belongs to the FAM107 family.

The polypeptide is Protein FAM107B (Rattus norvegicus (Rat)).